A 305-amino-acid chain; its full sequence is Serine/threonine-protein phosphatase PP1-delta (305 aa).

Mn(2+) is bound by residues Asp62, His64, Asp90, and Asn122. His123 (proton donor) is an active-site residue. Mn(2+) contacts are provided by His172 and His247.

It belongs to the PPP phosphatase family. In terms of tissue distribution, expressed in male germline including spermatocytes, spermatids and spermatozoa.

It localises to the chromosome. The protein resides in the cell projection. It is found in the pseudopodium. Its subcellular location is the cytoplasm. The catalysed reaction is O-phospho-L-seryl-[protein] + H2O = L-seryl-[protein] + phosphate. It carries out the reaction O-phospho-L-threonyl-[protein] + H2O = L-threonyl-[protein] + phosphate. Functionally, probable phosphatase which plays a redundant role with gsp-4 in spermatogenesis by regulating sister chromatid segregation during meiosis. In addition, involved in sperm motility by controlling the dynamic disassembly of major sperm proteins (MSP) in the spermatozoan pseudopodium. This chain is Serine/threonine-protein phosphatase PP1-delta, found in Caenorhabditis elegans.